A 166-amino-acid polypeptide reads, in one-letter code: Lipoprotein signal peptidase (166 aa).

The next 3 helical transmembrane spans lie at 12–32 (WLWV…LILQ), 70–90 (WFFS…MYRS), and 102–122 (ALII…GFVV). Active-site residues include Asp123 and Asp141. Residues 137–157 (FNLADSAICIGAALIVLEGFL) traverse the membrane as a helical segment.

Belongs to the peptidase A8 family.

The protein localises to the cell inner membrane. It catalyses the reaction Release of signal peptides from bacterial membrane prolipoproteins. Hydrolyzes -Xaa-Yaa-Zaa-|-(S,diacylglyceryl)Cys-, in which Xaa is hydrophobic (preferably Leu), and Yaa (Ala or Ser) and Zaa (Gly or Ala) have small, neutral side chains.. It functions in the pathway protein modification; lipoprotein biosynthesis (signal peptide cleavage). This protein specifically catalyzes the removal of signal peptides from prolipoproteins. This chain is Lipoprotein signal peptidase, found in Klebsiella pneumoniae subsp. pneumoniae (strain ATCC 700721 / MGH 78578).